A 305-amino-acid chain; its full sequence is Glycine--tRNA ligase alpha subunit (305 aa).

The protein belongs to the class-II aminoacyl-tRNA synthetase family. In terms of assembly, tetramer of two alpha and two beta subunits.

It localises to the cytoplasm. It catalyses the reaction tRNA(Gly) + glycine + ATP = glycyl-tRNA(Gly) + AMP + diphosphate. This chain is Glycine--tRNA ligase alpha subunit, found in Streptococcus pyogenes serotype M49 (strain NZ131).